We begin with the raw amino-acid sequence, 401 residues long: Glucose/mannose transporter GlcP (401 aa).

A run of 12 helical transmembrane segments spans residues 11–31 (AFFF…PFLL), 43–63 (VIIF…PLMI), 78–98 (IMLV…IIVM), 99–119 (AFLL…FVIA), 132–152 (EVLF…FIDI), 156–176 (FLPY…WLIF), 212–232 (LGFF…FANF), 247–267 (LISV…IGFV), 278–298 (LFSC…SNPI), 306–326 (LIGL…SIII), 336–356 (LFIA…GWSL), and 360–380 (TILL…GISV).

The protein belongs to the major facilitator superfamily.

Its subcellular location is the cell membrane. In terms of biological role, can transport glucose, mannose, 2-deoxyglucose and methyl alpha-glucoside, but not galactose. In Bacillus subtilis (strain 168), this protein is Glucose/mannose transporter GlcP (glcP).